A 127-amino-acid polypeptide reads, in one-letter code: Fluoride-specific ion channel FluC (127 aa).

Transmembrane regions (helical) follow at residues 4 to 24 (LLLA…LLSM), 35 to 55 (LGTL…FAWF), 71 to 91 (TGFC…VFLL), and 103 to 123 (VFVN…LFSA). Na(+) contacts are provided by Gly75 and Thr78.

This sequence belongs to the fluoride channel Fluc/FEX (TC 1.A.43) family.

It localises to the cell inner membrane. The enzyme catalyses fluoride(in) = fluoride(out). Its activity is regulated as follows. Na(+) is not transported, but it plays an essential structural role and its presence is essential for fluoride channel function. Functionally, fluoride-specific ion channel. Important for reducing fluoride concentration in the cell, thus reducing its toxicity. This chain is Fluoride-specific ion channel FluC, found in Escherichia coli O81 (strain ED1a).